Consider the following 531-residue polypeptide: Coiled-coil domain-containing protein 9 (531 aa).

Residues 40 to 531 form a disordered region; that stretch reads EDRKKAELEG…PGEAWPFESV (492 aa). Residues 59 to 72 are compositionally biased toward basic and acidic residues; it reads RSVEKENVAVESEK. At Ser80 the chain carries Phosphoserine. Thr95 is subject to Phosphothreonine. Omega-N-methylarginine is present on Arg107. Ser111 is subject to Phosphoserine. 3 positions are modified to omega-N-methylarginine: Arg121, Arg128, and Arg130. Arg131, Arg133, and Arg135 each carry asymmetric dimethylarginine. The residue at position 137 (Ser137) is a Phosphoserine. Composition is skewed to basic and acidic residues over residues 148–185, 194–217, and 227–241; these read ISDR…REGV, FLDD…EESR, and DFER…ERQG. Positions 149 to 185 form a coiled coil; sequence SDRKSKEWEERRRQNIEKMNEEMEKIAEYERNQREGV. Ser202 is subject to Phosphoserine. A phosphoserine mark is found at Ser248 and Ser255. 4 stretches are compositionally biased toward basic and acidic residues: residues 258-279, 289-302, 311-320, and 361-372; these read GRER…QERL, WRRE…DGMF, EPSHRYDDQA, and YSDHDDRWETKE. A phosphoserine mark is found at Ser376, Ser386, and Ser390. Over residues 386–395 the composition is skewed to low complexity; sequence SPETSPKETP. The span at 396 to 406 shows a compositional bias: pro residues; sequence MQPPEIPAPAH. The segment covering 411 to 446 has biased composition (acidic residues); it reads DEGEENEGEEDEEWEDISEDEEEEEIEVEEGDEEEP. Ser521 is subject to Phosphoserine.

As to quaternary structure, probable component of the exon junction complex (EJC); the association is RNA-dependent.

Its function is as follows. Probable component of the exon junction complex (EJC), a multiprotein complex that associates immediately upstream of the exon-exon junction on mRNAs and serves as a positional landmark for the intron exon structure of genes and directs post-transcriptional processes in the cytoplasm such as mRNA export, nonsense-mediated mRNA decay (NMD) or translation. This chain is Coiled-coil domain-containing protein 9, found in Homo sapiens (Human).